We begin with the raw amino-acid sequence, 519 residues long: Putative tyrosine carboxypeptidase MATCAP2 (519 aa).

Residues 63–103 are disordered; it reads SKEEKKHRSQKRFSSASSKQHRKPSKSPSSSHSKDPSRMTA. H330 serves as a coordination point for Zn(2+). E331 serves as the catalytic Nucleophile. Zn(2+) contacts are provided by H335 and E366.

The cofactor is Zn(2+).

Its function is as follows. Putative tyrosine carboxypeptidase. The chain is Putative tyrosine carboxypeptidase MATCAP2 from Mus musculus (Mouse).